Reading from the N-terminus, the 382-residue chain is Histidinol-phosphate aminotransferase (382 aa).

K215 carries the post-translational modification N6-(pyridoxal phosphate)lysine. The segment at 363–382 (NIDNQSKTHSQTSSIRKGTI) is disordered.

This sequence belongs to the class-II pyridoxal-phosphate-dependent aminotransferase family. Histidinol-phosphate aminotransferase subfamily. Homodimer. Pyridoxal 5'-phosphate is required as a cofactor.

The enzyme catalyses L-histidinol phosphate + 2-oxoglutarate = 3-(imidazol-4-yl)-2-oxopropyl phosphate + L-glutamate. It functions in the pathway amino-acid biosynthesis; L-histidine biosynthesis; L-histidine from 5-phospho-alpha-D-ribose 1-diphosphate: step 7/9. The polypeptide is Histidinol-phosphate aminotransferase (Yersinia pseudotuberculosis serotype O:3 (strain YPIII)).